The chain runs to 203 residues: MDFLQRDTVTIAKDLLGVRIIYHDELQTFTGYIVETEAYIGTKDRAAHGYNGKRTPKVESLYKQGGTIYAHVMHTHLLINFVTQLEGQPEGVLIRAIEPEEGIELMAINRGKNGFELTNGPGKWTKAFNIPRHLDGSKLNEGRLKIDTKNRKYPKEIEASGRIGIPNKGEWTHKPLRFTVKGNPYISRMKKSDMRQPEYTWRI.

Belongs to the DNA glycosylase MPG family.

The chain is Putative 3-methyladenine DNA glycosylase from Staphylococcus saprophyticus subsp. saprophyticus (strain ATCC 15305 / DSM 20229 / NCIMB 8711 / NCTC 7292 / S-41).